A 443-amino-acid chain; its full sequence is Threonine/serine transporter TdcC (443 aa).

Helical transmembrane passes span 22-42 (TTWTLGLFGTAIGAGVLFFPI), 44-64 (AGFGGLIPILLMLVLAYPIAF), 97-117 (GVVITFLYFFAICPLLWIYGV), 140-160 (FVALFLLLLMAFVIWFGKDLM), 163-183 (VMSYLVWPFIASLVLISLSLI), 207-227 (ILITVWLGISIMVFSFNFSPI), 261-281 (MLMVAVVMFFAFSCLFTLSPA), 311-331 (FAITLEYAASIIALVAIFKSF), 366-386 (ISMIFIMGSTWVVAYANPNIL), 389-409 (IEAMGAPIIASLLCLLPMYAI), and 423-443 (DNVFVTVIGLLTILNIVYKLF).

It belongs to the amino acid/polyamine transporter 2 family. SdaC/TdcC subfamily.

The protein resides in the cell inner membrane. It carries out the reaction L-threonine(in) + H(+)(in) = L-threonine(out) + H(+)(out). The enzyme catalyses L-serine(in) + H(+)(in) = L-serine(out) + H(+)(out). In terms of biological role, involved in the import of threonine and serine into the cell, with the concomitant import of a proton (symport system). The protein is Threonine/serine transporter TdcC of Shigella sonnei (strain Ss046).